Here is a 103-residue protein sequence, read N- to C-terminus: Pyrimidine/purine nucleoside phosphorylase (103 aa).

Belongs to the nucleoside phosphorylase PpnP family.

The enzyme catalyses a purine D-ribonucleoside + phosphate = a purine nucleobase + alpha-D-ribose 1-phosphate. The catalysed reaction is adenosine + phosphate = alpha-D-ribose 1-phosphate + adenine. It carries out the reaction cytidine + phosphate = cytosine + alpha-D-ribose 1-phosphate. It catalyses the reaction guanosine + phosphate = alpha-D-ribose 1-phosphate + guanine. The enzyme catalyses inosine + phosphate = alpha-D-ribose 1-phosphate + hypoxanthine. The catalysed reaction is thymidine + phosphate = 2-deoxy-alpha-D-ribose 1-phosphate + thymine. It carries out the reaction uridine + phosphate = alpha-D-ribose 1-phosphate + uracil. It catalyses the reaction xanthosine + phosphate = alpha-D-ribose 1-phosphate + xanthine. Its function is as follows. Catalyzes the phosphorolysis of diverse nucleosides, yielding D-ribose 1-phosphate and the respective free bases. Can use uridine, adenosine, guanosine, cytidine, thymidine, inosine and xanthosine as substrates. Also catalyzes the reverse reactions. The protein is Pyrimidine/purine nucleoside phosphorylase of Shewanella baltica (strain OS223).